Reading from the N-terminus, the 379-residue chain is Probable leucine aminopeptidase ARB_01443 (379 aa).

Positions 1–18 are cleaved as a signal peptide; sequence MKIATLAVVSAFAATAIA. 2 residues coordinate Zn(2+): histidine 182 and aspartate 201. 2 N-linked (GlcNAc...) asparagine glycosylation sites follow: asparagine 202 and asparagine 226. 2 residues coordinate Zn(2+): glutamate 240 and aspartate 267. Residues cysteine 312 and cysteine 316 are joined by a disulfide bond. Histidine 345 contributes to the Zn(2+) binding site.

Belongs to the peptidase M28 family. M28E subfamily. As to quaternary structure, monomer. Zn(2+) is required as a cofactor.

It localises to the secreted. Probable extracellular aminopeptidase which contributes to pathogenicity. The chain is Probable leucine aminopeptidase ARB_01443 from Arthroderma benhamiae (strain ATCC MYA-4681 / CBS 112371) (Trichophyton mentagrophytes).